The primary structure comprises 333 residues: Ketol-acid reductoisomerase (NADP(+)) (333 aa).

The KARI N-terminal Rossmann domain maps to 1-179 (MFYDDDADLT…GGTRAGVIKT (179 aa)). Residues 22-25 (YGSQ), K45, S48, S50, and 80-83 (DTAQ) contribute to the NADP(+) site. H105 is an active-site residue. G131 contributes to the NADP(+) binding site. The region spanning 180–325 (TFKDETETDL…KRLRDLMSWV (146 aa)) is the KARI C-terminal knotted domain. Residues D188, E192, E224, and E228 each contribute to the Mg(2+) site. Residue S249 participates in substrate binding.

Belongs to the ketol-acid reductoisomerase family. Requires Mg(2+) as cofactor.

The enzyme catalyses (2R)-2,3-dihydroxy-3-methylbutanoate + NADP(+) = (2S)-2-acetolactate + NADPH + H(+). The catalysed reaction is (2R,3R)-2,3-dihydroxy-3-methylpentanoate + NADP(+) = (S)-2-ethyl-2-hydroxy-3-oxobutanoate + NADPH + H(+). It participates in amino-acid biosynthesis; L-isoleucine biosynthesis; L-isoleucine from 2-oxobutanoate: step 2/4. Its pathway is amino-acid biosynthesis; L-valine biosynthesis; L-valine from pyruvate: step 2/4. Its function is as follows. Involved in the biosynthesis of branched-chain amino acids (BCAA). Catalyzes an alkyl-migration followed by a ketol-acid reduction of (S)-2-acetolactate (S2AL) to yield (R)-2,3-dihydroxy-isovalerate. In the isomerase reaction, S2AL is rearranged via a Mg-dependent methyl migration to produce 3-hydroxy-3-methyl-2-ketobutyrate (HMKB). In the reductase reaction, this 2-ketoacid undergoes a metal-dependent reduction by NADPH to yield (R)-2,3-dihydroxy-isovalerate. This chain is Ketol-acid reductoisomerase (NADP(+)), found in Mycobacterium avium (strain 104).